The chain runs to 351 residues: Photosystem II D2 protein 2 (351 aa).

The chain crosses the membrane as a helical span at residues 39–59; sequence CAFLSIGGWFTGTTFVTSWYT. Residue H116 participates in chlorophyll a binding. The chain crosses the membrane as a helical span at residues 123-139; that stretch reads GFMLRQFEIARLVNVRP. Q128 and N141 together coordinate pheophytin a. Residues 151–164 form a helical membrane-spanning segment; the sequence is VFVSVFLMYPLGQS. H196 serves as a coordination point for chlorophyll a. A helical transmembrane segment spans residues 206 to 226; that stretch reads GALLCAIHGATVENTLFEDTK. A plastoquinone contacts are provided by H213 and F260. Fe cation is bound at residue H213. H267 serves as a coordination point for Fe cation. Residues 277 to 293 form a helical membrane-spanning segment; that stretch reads GLWASAIGLVGIALNMR.

This sequence belongs to the reaction center PufL/M/PsbA/D family. PSII is composed of 1 copy each of membrane proteins PsbA, PsbB, PsbC, PsbD, PsbE, PsbF, PsbH, PsbI, PsbJ, PsbK, PsbL, PsbM, PsbT, PsbX, PsbY, PsbZ, Psb30/Ycf12, peripheral proteins PsbO, CyanoQ (PsbQ), PsbU, PsbV and a large number of cofactors. It forms dimeric complexes. The cofactor is The D1/D2 heterodimer binds P680, chlorophylls that are the primary electron donor of PSII, and subsequent electron acceptors. It shares a non-heme iron and each subunit binds pheophytin, quinone, additional chlorophylls, carotenoids and lipids. There is also a Cl(-1) ion associated with D1 and D2, which is required for oxygen evolution. The PSII complex binds additional chlorophylls, carotenoids and specific lipids..

The protein localises to the cellular thylakoid membrane. The catalysed reaction is 2 a plastoquinone + 4 hnu + 2 H2O = 2 a plastoquinol + O2. Functionally, photosystem II (PSII) is a light-driven water:plastoquinone oxidoreductase that uses light energy to abstract electrons from H(2)O, generating O(2) and a proton gradient subsequently used for ATP formation. It consists of a core antenna complex that captures photons, and an electron transfer chain that converts photonic excitation into a charge separation. The D1/D2 (PsbA/PsbD) reaction center heterodimer binds P680, the primary electron donor of PSII as well as several subsequent electron acceptors. D2 is needed for assembly of a stable PSII complex. This Acaryochloris marina (strain MBIC 11017) protein is Photosystem II D2 protein 2.